The sequence spans 356 residues: S-adenosylmethionine:tRNA ribosyltransferase-isomerase (356 aa).

This sequence belongs to the QueA family. Monomer.

It is found in the cytoplasm. It carries out the reaction 7-aminomethyl-7-carbaguanosine(34) in tRNA + S-adenosyl-L-methionine = epoxyqueuosine(34) in tRNA + adenine + L-methionine + 2 H(+). The protein operates within tRNA modification; tRNA-queuosine biosynthesis. Its function is as follows. Transfers and isomerizes the ribose moiety from AdoMet to the 7-aminomethyl group of 7-deazaguanine (preQ1-tRNA) to give epoxyqueuosine (oQ-tRNA). The protein is S-adenosylmethionine:tRNA ribosyltransferase-isomerase of Nitrosospira multiformis (strain ATCC 25196 / NCIMB 11849 / C 71).